The sequence spans 374 residues: 4-hydroxy-3-methylbut-2-en-1-yl diphosphate synthase (flavodoxin) (374 aa).

4 residues coordinate [4Fe-4S] cluster: Cys268, Cys271, Cys303, and Glu310.

This sequence belongs to the IspG family. Requires [4Fe-4S] cluster as cofactor.

The enzyme catalyses (2E)-4-hydroxy-3-methylbut-2-enyl diphosphate + oxidized [flavodoxin] + H2O + 2 H(+) = 2-C-methyl-D-erythritol 2,4-cyclic diphosphate + reduced [flavodoxin]. It functions in the pathway isoprenoid biosynthesis; isopentenyl diphosphate biosynthesis via DXP pathway; isopentenyl diphosphate from 1-deoxy-D-xylulose 5-phosphate: step 5/6. Its function is as follows. Converts 2C-methyl-D-erythritol 2,4-cyclodiphosphate (ME-2,4cPP) into 1-hydroxy-2-methyl-2-(E)-butenyl 4-diphosphate. This chain is 4-hydroxy-3-methylbut-2-en-1-yl diphosphate synthase (flavodoxin), found in Geobacillus kaustophilus (strain HTA426).